We begin with the raw amino-acid sequence, 137 residues long: ATP synthase epsilon chain (137 aa).

It belongs to the ATPase epsilon chain family. F-type ATPases have 2 components, CF(1) - the catalytic core - and CF(0) - the membrane proton channel. CF(1) has five subunits: alpha(3), beta(3), gamma(1), delta(1), epsilon(1). CF(0) has three main subunits: a, b and c.

It is found in the cell inner membrane. In terms of biological role, produces ATP from ADP in the presence of a proton gradient across the membrane. The protein is ATP synthase epsilon chain of Magnetococcus marinus (strain ATCC BAA-1437 / JCM 17883 / MC-1).